Here is a 386-residue protein sequence, read N- to C-terminus: Ovalbumin (386 aa).

An N-acetylglycine modification is found at G2. A signal peptide (not cleaved) is located at residues H22–D48. Position 69 is a phosphoserine (S69). A disulfide bond links C74 and C121. E192 contributes to the Ca(2+) binding site. N-linked (GlcNAc...) asparagine glycosylation is present at N293. S345 carries the post-translational modification Phosphoserine.

This sequence belongs to the serpin family. Ov-serpin subfamily. In terms of assembly, homodimer. Undergoes proteolytic cleavage first at the canonical P1-P1' site, and then at the P8-P7 site by subtilisin. Major protein of egg white. Expressed in the magnum of the oviduct (at protein level).

Its subcellular location is the secreted. Its function is as follows. Non-inhibitory serpin. Storage protein of egg white. This is Ovalbumin (SERPINB14) from Gallus gallus (Chicken).